The chain runs to 780 residues: Endonuclease MutS2 (780 aa).

334–341 (GPNAGGKT) serves as a coordination point for ATP. The Smr domain occupies 706–780 (IDIRGMRSVD…GGSGKTIVEI (75 aa)).

This sequence belongs to the DNA mismatch repair MutS family. MutS2 subfamily. As to quaternary structure, homodimer. Binds to stalled ribosomes, contacting rRNA.

Its function is as follows. Endonuclease that is involved in the suppression of homologous recombination and thus may have a key role in the control of bacterial genetic diversity. Acts as a ribosome collision sensor, splitting the ribosome into its 2 subunits. Detects stalled/collided 70S ribosomes which it binds and splits by an ATP-hydrolysis driven conformational change. Acts upstream of the ribosome quality control system (RQC), a ribosome-associated complex that mediates the extraction of incompletely synthesized nascent chains from stalled ribosomes and their subsequent degradation. Probably generates substrates for RQC. The polypeptide is Endonuclease MutS2 (Borreliella burgdorferi (strain ATCC 35210 / DSM 4680 / CIP 102532 / B31) (Borrelia burgdorferi)).